The following is a 381-amino-acid chain: MIISSTNDYREAARRRVPPFMFHYADGGSFSERTLERNVTDLADLALRQRVLKDMSQLDTEIELFGEKLAMPAVLAPVGACGMYARRGEVQAAQAAENKGIPFTLSTVSICPIEEVTAAIKRPMWFQLYVLKDRGFMKHVLERAKAAGCSTLVFTVDMPTPGARYRDRHSGMSGDYKEIRRALQAVTHPFWAWDVGIKGKPHTLGNVSAYTGKAVGLDDYVVWLGENFDPSISWKDLEWIRDFWDGPMVIKGILDPEDAKDAVRFGADGIVVSNHGGRQLDGALSSARALPSIADAVKGDIKILADSGIRNGLDIVRMLALGADATMLGRAFVYALGAAGKAGVENMLDIFKKEMHVAMTLTSNQKISDITRDALVDLSKL.

Residues 1–380 (MIISSTNDYR…TRDALVDLSK (380 aa)) enclose the FMN hydroxy acid dehydrogenase domain. Tyr24 provides a ligand contact to substrate. FMN is bound by residues Ser106 and Gln127. Tyr129 contributes to the substrate binding site. Residue Thr155 coordinates FMN. Arg164 provides a ligand contact to substrate. Lys251 provides a ligand contact to FMN. Residue His275 is the Proton acceptor of the active site. Arg278 serves as a coordination point for substrate. Residue 306 to 330 (DSGIRNGLDIVRMLALGADATMLGR) participates in FMN binding.

It belongs to the FMN-dependent alpha-hydroxy acid dehydrogenase family. Requires FMN as cofactor.

The protein localises to the cell inner membrane. It carries out the reaction (S)-lactate + A = pyruvate + AH2. Its function is as follows. Catalyzes the conversion of L-lactate to pyruvate. Is coupled to the respiratory chain. The polypeptide is L-lactate dehydrogenase (Actinobacillus pleuropneumoniae serotype 3 (strain JL03)).